Consider the following 76-residue polypeptide: Esculentin-2MT2 (76 aa).

The N-terminal stretch at 1 to 22 is a signal peptide; that stretch reads MFTLKKSMLLLFFLGTISLSLC. Residues 23 to 37 constitute a propeptide, removed in mature form; sequence EEERSADEDDGEKEV. Cysteine 70 and cysteine 76 are oxidised to a cystine.

Belongs to the frog skin active peptide (FSAP) family. Esculentin subfamily. In terms of tissue distribution, expressed by the skin glands.

It is found in the secreted. Antimicrobial peptide. Active against a variety of Gram-negative and Gram-positive bacterial strains. Active against fungi. Shows strong hemolytic activity against human erythrocytes. The protein is Esculentin-2MT2 of Amolops mantzorum (Sichuan torrent frog).